Reading from the N-terminus, the 625-residue chain is Endoglucanase 13 (625 aa).

The N-terminal stretch at 1–34 (MAATMNKTPATTFLLIPAAASLVLLLAAAASVEA) is a signal peptide. The Nucleophile role is filled by Asp-91. Residue His-427 is part of the active site. Asn-440 carries an N-linked (GlcNAc...) asparagine glycan. Residues Asp-479 and Glu-488 contribute to the active site. Residues 509 to 530 (ADNTPEYTPAPNAPSPSNGGSP) form a disordered region.

It belongs to the glycosyl hydrolase 9 (cellulase E) family. Expressed in roots and flowers.

Its subcellular location is the secreted. It catalyses the reaction Endohydrolysis of (1-&gt;4)-beta-D-glucosidic linkages in cellulose, lichenin and cereal beta-D-glucans.. The chain is Endoglucanase 13 (GLU6) from Oryza sativa subsp. japonica (Rice).